The chain runs to 526 residues: Catalase (526 aa).

Positions 1–22 (MADDREKSTDQMKLWKEGRGSQ) are enriched in basic and acidic residues. The segment at 1–29 (MADDREKSTDQMKLWKEGRGSQRPDVLTT) is disordered. Active-site residues include H75 and N148. NADP(+)-binding residues include H194, S201, R203, N213, K237, W303, H305, and K306. Y358 contacts heme.

Belongs to the catalase family. Homotetramer. It depends on heme as a cofactor. NADP(+) serves as cofactor.

The protein resides in the peroxisome matrix. The catalysed reaction is 2 H2O2 = O2 + 2 H2O. Catalyzes the degradation of hydrogen peroxide (H(2)O(2)) generated by peroxisomal oxidases to water and oxygen, thereby protecting cells from the toxic effects of hydrogen peroxide. In Danio rerio (Zebrafish), this protein is Catalase (cat).